The chain runs to 469 residues: Abscisic acid 8'-hydroxylase CYP707A2 (469 aa).

The helical transmembrane segment at 3–23 threads the bilayer; the sequence is FVSMLCLFTFISLTLLLIHSI. Cys-414 is a heme binding site.

It belongs to the cytochrome P450 family. The cofactor is heme. As to expression, expressed at low levels in fruit.

It localises to the membrane. The enzyme catalyses 2-cis-(+)-abscisate + reduced [NADPH--hemoprotein reductase] + O2 = (+)-8'-hydroxyabscisate + oxidized [NADPH--hemoprotein reductase] + H2O + H(+). The protein operates within plant hormone degradation; abscisic acid degradation. Its function is as follows. Negative regulator of fruit ripening involved in the oxidative degradation of abscisic acid (ABA). This Solanum lycopersicum (Tomato) protein is Abscisic acid 8'-hydroxylase CYP707A2.